A 373-amino-acid polypeptide reads, in one-letter code: Dual-specificity RNA methyltransferase RlmN (373 aa).

The Proton acceptor role is filled by E94. Positions 100–339 (EDDRATLCVS…VIVRKTRGDD (240 aa)) constitute a Radical SAM core domain. A disulfide bridge connects residues C107 and C344. C114, C118, and C121 together coordinate [4Fe-4S] cluster. S-adenosyl-L-methionine contacts are provided by residues 168 to 169 (GE), S200, 222 to 224 (SIH), and N301. The active-site S-methylcysteine intermediate is the C344.

This sequence belongs to the radical SAM superfamily. RlmN family. [4Fe-4S] cluster serves as cofactor.

The protein localises to the cytoplasm. The enzyme catalyses adenosine(2503) in 23S rRNA + 2 reduced [2Fe-2S]-[ferredoxin] + 2 S-adenosyl-L-methionine = 2-methyladenosine(2503) in 23S rRNA + 5'-deoxyadenosine + L-methionine + 2 oxidized [2Fe-2S]-[ferredoxin] + S-adenosyl-L-homocysteine. The catalysed reaction is adenosine(37) in tRNA + 2 reduced [2Fe-2S]-[ferredoxin] + 2 S-adenosyl-L-methionine = 2-methyladenosine(37) in tRNA + 5'-deoxyadenosine + L-methionine + 2 oxidized [2Fe-2S]-[ferredoxin] + S-adenosyl-L-homocysteine. Specifically methylates position 2 of adenine 2503 in 23S rRNA and position 2 of adenine 37 in tRNAs. m2A2503 modification seems to play a crucial role in the proofreading step occurring at the peptidyl transferase center and thus would serve to optimize ribosomal fidelity. This is Dual-specificity RNA methyltransferase RlmN from Shewanella sp. (strain MR-7).